The primary structure comprises 320 residues: D-amino-acid oxidase (320 aa).

Positions 18, 19, 20, 21, 47, 48, 49, 53, 54, 55, 161, and 176 each coordinate FAD. Residues tyrosine 220 and arginine 275 each coordinate D-proline. The D-serine site is built by tyrosine 220 and arginine 275. Residues arginine 275, glycine 301, glycine 302, glycine 304, and threonine 306 each contribute to the FAD site. Glycine 302 lines the D-proline pocket. Residue glycine 302 coordinates D-serine.

The protein belongs to the DAMOX/DASOX family. The cofactor is FAD.

It is found in the cytoplasm. The protein resides in the secreted. Its subcellular location is the cell wall. It catalyses the reaction a D-alpha-amino acid + O2 + H2O = a 2-oxocarboxylate + H2O2 + NH4(+). The enzyme catalyses D-leucine + O2 + H2O = 4-methyl-2-oxopentanoate + H2O2 + NH4(+). The catalysed reaction is D-valine + O2 + H2O = 3-methyl-2-oxobutanoate + H2O2 + NH4(+). It carries out the reaction D-isoleucine + O2 + H2O = (R)-3-methyl-2-oxopentanoate + H2O2 + NH4(+). It catalyses the reaction D-methionine + O2 + H2O = 4-methylsulfanyl-2-oxobutanoate + H2O2 + NH4(+). In terms of biological role, catalyzes the oxidative deamination of D-amino acids with broad substrate specificity. The chain is D-amino-acid oxidase from Streptomyces coelicolor (strain ATCC BAA-471 / A3(2) / M145).